Here is a 228-residue protein sequence, read N- to C-terminus: Ribose-5-phosphate isomerase A (228 aa).

Substrate is bound by residues 29–32 (TGST), 85–88 (DGAD), and 98–101 (KGGG). Glutamate 107 serves as the catalytic Proton acceptor. Lysine 125 is a binding site for substrate.

Belongs to the ribose 5-phosphate isomerase family. In terms of assembly, homodimer.

The catalysed reaction is aldehydo-D-ribose 5-phosphate = D-ribulose 5-phosphate. It participates in carbohydrate degradation; pentose phosphate pathway; D-ribose 5-phosphate from D-ribulose 5-phosphate (non-oxidative stage): step 1/1. Functionally, catalyzes the reversible conversion of ribose-5-phosphate to ribulose 5-phosphate. The protein is Ribose-5-phosphate isomerase A of Staphylococcus aureus (strain MRSA252).